The following is a 253-amino-acid chain: Sulfate transporter CysZ (253 aa).

4 helical membrane passes run 31-51 (FVIL…WWLF), 72-92 (LSYI…GYFF), 151-171 (IVLL…PVLW), and 222-242 (IPVL…AMWV).

The protein belongs to the CysZ family.

Its subcellular location is the cell inner membrane. Functionally, high affinity, high specificity proton-dependent sulfate transporter, which mediates sulfate uptake. Provides the sulfur source for the cysteine synthesis pathway. The sequence is that of Sulfate transporter CysZ from Escherichia fergusonii (strain ATCC 35469 / DSM 13698 / CCUG 18766 / IAM 14443 / JCM 21226 / LMG 7866 / NBRC 102419 / NCTC 12128 / CDC 0568-73).